A 630-amino-acid polypeptide reads, in one-letter code: YTH domain-containing family protein 1 (630 aa).

3 disordered regions span residues 38-113 (DMTQ…YMQQ), 160-183 (YYPQ…AGPY), and 200-241 (QVGD…QSGH). A compositionally biased stretch (polar residues) spans 70-102 (PGQQQQHQYGSPPNTNGNAQPMPQAHGNNTMNS). The YTH domain maps to 382 to 590 (EKYFILKSLT…SVGRKLTGLF (209 aa)).

It belongs to the YTHDF family. YTHDF1 subfamily.

The protein localises to the cytoplasm. Its subcellular location is the P-body. Its function is as follows. Specifically recognizes and binds N6-methyladenosine (m6A)-containing mRNAs, and regulates their stability. M6A is a modification present at internal sites of mRNAs and some non-coding RNAs and plays a role in mRNA stability and processing. Plays a role in pathogenicity towards plant host. The protein is YTH domain-containing family protein 1 of Pyricularia oryzae (strain 70-15 / ATCC MYA-4617 / FGSC 8958) (Rice blast fungus).